A 409-amino-acid chain; its full sequence is Arginine deiminase (409 aa).

Residue Cys399 is the Amidino-cysteine intermediate of the active site.

This sequence belongs to the arginine deiminase family.

Its subcellular location is the cytoplasm. The enzyme catalyses L-arginine + H2O = L-citrulline + NH4(+). It functions in the pathway amino-acid degradation; L-arginine degradation via ADI pathway; carbamoyl phosphate from L-arginine: step 1/2. This Streptococcus pneumoniae (strain 70585) protein is Arginine deiminase.